Consider the following 168-residue polypeptide: DAZ-associated protein 2 (168 aa).

Low complexity predominate over residues 1–13; it reads MNSKGQYPTQPTY. The disordered stretch occupies residues 1 to 25; sequence MNSKGQYPTQPTYPVQPPGNPVYPQ. The PPAY signature appears at 39 to 42; the sequence is PPAY. Residue S77 is modified to Phosphoserine.

In terms of assembly, interacts with SOX6. Interacts with DAZ1 and DAZL. Interacts with IL17RB. May interact with FAM168B. Interacts with INCA1. Interacts with EIF4G1 and EIF4G2. Interacts (via PPAY motif) with NEDD4 (via WW domains). Interacts with transcription factor TCF4; the interaction results in localization of DAZAP2 to the nucleus. Interacts with transcription factors TCF7 and TCF7L1. Interacts with transcription factor LEF1. Interacts with serine/threonine-protein kinase HIPK2; the interaction results in phosphorylation of DAZAP2 which causes localization of DAZAP2 to the nucleus, reduces interaction of DAZAP2 with HIPK2 and prevents DAZAP2-dependent degradation of HIPK2. Interacts with ubiquitin ligase SIAH1; the interaction is decreased following phosphorylation of DAZAP2 by HIPK2. Interacts with TP53; the interaction is triggered by DNA damage. Ubiquitinated by SMURF2, leading to proteasomal degradation. Ubiquitinated by NEDD4, leading to proteasomal degradation. Post-translationally, following DNA damage, phosphorylated by HIPK2 which promotes DAZAP2 localization to the nucleus, reduces interaction of DAZAP2 with HIPK2 and SIAH1, and prevents DAZAP2-dependent ubiquitination of HIPK2 by E3 ubiquitin-protein ligase SIAH1 and subsequent HIPK2 proteasomal degradation.

It is found in the cytoplasm. Its subcellular location is the nucleus. The protein localises to the nucleus speckle. The protein resides in the nuclear body. It localises to the stress granule. Its function is as follows. In unstressed cells, promotes SIAH1-mediated polyubiquitination and degradation of the serine/threonine-protein kinase HIPK2, probably by acting as a loading factor that potentiates complex formation between HIPK2 and ubiquitin ligase SIAH1. In response to DNA damage, localizes to the nucleus following phosphorylation by HIPK2 and modulates the expression of a subset of TP53/p53 target genes by binding to TP53 at target gene promoters. This limits the expression of a number of cell death-mediating TP53 target genes, reducing DNA damage-induced cell death. Enhances the binding of transcription factor TCF7L2/TCF4, a Wnt signaling pathway effector, to the promoters of target genes. Plays a role in stress granule formation. This is DAZ-associated protein 2 from Macaca fascicularis (Crab-eating macaque).